The chain runs to 235 residues: tRNA (guanine-N(1)-)-methyltransferase (235 aa).

S-adenosyl-L-methionine-binding positions include Gly112 and 132-137 (IGDYVI).

It belongs to the RNA methyltransferase TrmD family. As to quaternary structure, homodimer.

Its subcellular location is the cytoplasm. It catalyses the reaction guanosine(37) in tRNA + S-adenosyl-L-methionine = N(1)-methylguanosine(37) in tRNA + S-adenosyl-L-homocysteine + H(+). In terms of biological role, specifically methylates guanosine-37 in various tRNAs. This Anaplasma marginale (strain Florida) protein is tRNA (guanine-N(1)-)-methyltransferase.